Reading from the N-terminus, the 339-residue chain is MDKKIILAIESSCDETAAAVVVNGREVLSNIIASQIDTHKKFGGVVPEVASRMHIEAVDSVVKAALLEAGISIDDVDAIGVTYGPGLVGALLVGLQYAKGLALGSKKPLIGVNHIQGHISANFIEHKDLKPPFVSLVVSGGHTFIVHVKGYRDFEVIGQTRDDAAGEAYDKVARALELGYPGGPKIDKLAKQGNKDAIEFPRAKFQDDTLDFSFSGVKSAVLNYLNKAKMKEEEVNKADIAASFQKAIIDVLKTNLFLTCERKGIKKIAVAGGVASNSCLRETLLEEGRKKGIEILFPSPILCTDNAAMIGSAAYFNYQEGAVSDLNINAKPNLKLGER.

The Fe cation site is built by His114 and His118. Substrate contacts are provided by residues 137–141 (VVSGG), Asp170, Gly183, Asp187, and Asn277. Asp305 serves as a coordination point for Fe cation.

This sequence belongs to the KAE1 / TsaD family. Fe(2+) is required as a cofactor.

The protein resides in the cytoplasm. It catalyses the reaction L-threonylcarbamoyladenylate + adenosine(37) in tRNA = N(6)-L-threonylcarbamoyladenosine(37) in tRNA + AMP + H(+). Required for the formation of a threonylcarbamoyl group on adenosine at position 37 (t(6)A37) in tRNAs that read codons beginning with adenine. Is involved in the transfer of the threonylcarbamoyl moiety of threonylcarbamoyl-AMP (TC-AMP) to the N6 group of A37, together with TsaE and TsaB. TsaD likely plays a direct catalytic role in this reaction. The chain is tRNA N6-adenosine threonylcarbamoyltransferase from Clostridium beijerinckii (strain ATCC 51743 / NCIMB 8052) (Clostridium acetobutylicum).